Consider the following 67-residue polypeptide: Pepsin B (67 aa).

A propeptide spans 1 to 43 (MERIILRKGKSIREAMEEQGVLEKFLKNRPKIDPAAKYHFNND) (activation peptide).

It belongs to the peptidase A1 family.

The protein localises to the secreted. It carries out the reaction Degradation of gelatin, little activity on hemoglobin. Specificity on B chain of insulin more restricted than that of pepsin A. Does not cleave 1-Phe-|-Val-2, 4-Gln-|-His-5 or 23-Gly-|-Phe-24.. This Sus scrofa (Pig) protein is Pepsin B (PGB).